Consider the following 703-residue polypeptide: Cyclomaltodextrin glucanotransferase (703 aa).

Positions 1–29 (MNDLNDFLKTILLSFIFFLLLSLPTVAEA) are cleaved as a signal peptide. The tract at residues 30 to 160 (DVTNKVNYSK…GIKVIMDFTP (131 aa)) is A1. Positions 52, 54, 57, and 58 each coordinate Ca(2+). A disulfide bridge connects residues Cys-68 and Cys-75. Residues Gly-76 and Asp-78 each coordinate Ca(2+). Residue 122 to 123 (YW) coordinates substrate. Asn-161 contributes to the Ca(2+) binding site. Positions 161-224 (NHSSPALETN…NLYDLADYDL (64 aa)) are b. Residue His-162 coordinates substrate. Position 212 (Ile-212) interacts with Ca(2+). A substrate-binding site is contributed by 215-218 (NLYD). Asp-221 serves as a coordination point for Ca(2+). The interval 225-428 (NNTVMDQYLK…LRQTNSALGY (204 aa)) is A2. Arg-249 contributes to the substrate binding site. Residue Asp-251 is the Nucleophile of the active site. 254–255 (KH) provides a ligand contact to substrate. Position 255 (His-255) interacts with Ca(2+). The active-site Proton donor is Glu-279. Substrate contacts are provided by His-349, Asp-393, and Arg-397. The segment at 429 to 516 (GTTTERWLNE…SVAVWQVSNP (88 aa)) is c. Residues 517–600 (STSPLIGQVG…SPTYKEFEVL (84 aa)) are d. The IPT/TIG domain occupies 520–598 (PLIGQVGPMM…IKSPTYKEFE (79 aa)). Residues 599 to 703 (VLSGNQVSVR…TGTDTVMINW (105 aa)) enclose the CBM20 domain. The segment at 601-703 (SGNQVSVRFG…TGTDTVMINW (103 aa)) is e.

This sequence belongs to the glycosyl hydrolase 13 family. In terms of assembly, monomer. Ca(2+) is required as a cofactor.

The protein localises to the secreted. It catalyses the reaction Cyclizes part of a (1-&gt;4)-alpha-D-glucan chain by formation of a (1-&gt;4)-alpha-D-glucosidic bond.. In Bacillus sp. (strain 1-1), this protein is Cyclomaltodextrin glucanotransferase (cgt).